The sequence spans 1017 residues: NLR family CARD domain-containing protein 4 (1017 aa).

A CARD domain is found at 1 to 88 (MNFIKENSQV…PLFQELHGLS (88 aa)). The interval 95–298 (EEDLDDLAQE…QFGALIAEVG (204 aa)) is nucleotide-binding domain (NBD). The region spanning 163-476 (SPCIIEGESG…VTKGNGHLQK (314 aa)) is the NACHT domain. 169–176 (GESGKGKS) serves as a coordination point for ATP. Residues 356–463 (SHTQTTLFCT…RLSSLLTSGE (108 aa)) are winged-helix domain (WHD). The residue at position 533 (Ser533) is a Phosphoserine. 12 LRR repeats span residues 578–598 (FFRG…LFDF), 649–672 (KQEF…DIKY), 728–751 (VTNL…LTDN), 755–778 (LKNL…KLAE), 780–805 (LTNL…DYIV), 817–840 (EIQL…LHNL), 841–863 (ARLS…ALQQ), 871–895 (LEQL…LLEQ), 904–926 (KLGL…FFEK), 929–956 (LENF…GFEN), 958–978 (KELV…SLVR), and 992–1014 (EVQL…AFKL).

Homooligomer; homooligomerizes following activation of Naip proteins by pathogenic proteins such as S.typhimurium (Salmonella) flagellin or PrgJ. Component of the NLRC4 inflammasome, at least composed of NLRC4, caspase-1 (CASP1) and some NAIP family member. Interacts with EIF2AK2/PKR. In terms of processing, phosphorylated at Ser-533 following infection of macrophages with S.typhimurium (Salmonella). Phosphorylation is essential for NLRC4 inflammasome function to promote caspase-1 activation and pyroptosis. PRKCD phosphorylates Ser-533 in vitro.

Its subcellular location is the cytoplasm. It localises to the cytosol. Functionally, key component of inflammasomes that indirectly senses specific proteins from pathogenic bacteria and fungi and responds by assembling an inflammasome complex that promotes caspase-1 activation, cytokine production and macrophage pyroptosis. The NLRC4 inflammasome is activated as part of the innate immune response to a range of intracellular bacteria. This Bos taurus (Bovine) protein is NLR family CARD domain-containing protein 4 (NLRC4).